Reading from the N-terminus, the 508-residue chain is DEAD-box ATP-dependent RNA helicase 8 (508 aa).

Residues 1 to 123 form a disordered region; that stretch reads MDPRARYPPG…LKLPPQDTRY (123 aa). Residues 18–53 show a composition bias toward low complexity; the sequence is NPNYYNRGPPLQQQHNHHQQQQTSAPHHQQYVQRQP. Over residues 54 to 64 the composition is skewed to basic residues; it reads QQHHHHNHHQQ. Residues 134–162 carry the Q motif motif; it reads NEFEDYFLKRELLMGIYEKGFERPSPIQE. The Helicase ATP-binding domain maps to 165–335; sequence IPIALTGSDI…DKYLPKPYVI (171 aa). 178–185 serves as a coordination point for ATP; sequence AKNGTGKT. The DEAD box motif lies at 283–286; it reads DEAD. In terms of domain architecture, Helicase C-terminal spans 345-505; that stretch reads GITQFYAFVE…PIPPQIDQAI (161 aa).

It belongs to the DEAD box helicase family. DDX6/DHH1 subfamily.

It is found in the cytoplasm. It localises to the P-body. It catalyses the reaction ATP + H2O = ADP + phosphate + H(+). In terms of biological role, ATP-dependent RNA helicase involved in mRNA turnover, and more specifically in mRNA decapping. This Oryza sativa subsp. japonica (Rice) protein is DEAD-box ATP-dependent RNA helicase 8.